A 430-amino-acid chain; its full sequence is Adenylosuccinate synthetase (430 aa).

GTP contacts are provided by residues 12 to 18 (GDEGKGK) and 40 to 42 (GHT). Catalysis depends on Asp13, which acts as the Proton acceptor. Positions 13 and 40 each coordinate Mg(2+). Residues 13–16 (DEGK), 38–41 (NAGH), Thr128, Arg142, Gln223, Thr238, and Arg302 contribute to the IMP site. The active-site Proton donor is His41. 298–304 (TTTGRPR) contacts substrate. GTP contacts are provided by residues Arg304, 330–332 (SID), and 412–414 (SVG).

It belongs to the adenylosuccinate synthetase family. In terms of assembly, homodimer. Mg(2+) is required as a cofactor.

The protein resides in the cytoplasm. It catalyses the reaction IMP + L-aspartate + GTP = N(6)-(1,2-dicarboxyethyl)-AMP + GDP + phosphate + 2 H(+). It participates in purine metabolism; AMP biosynthesis via de novo pathway; AMP from IMP: step 1/2. In terms of biological role, plays an important role in the de novo pathway of purine nucleotide biosynthesis. Catalyzes the first committed step in the biosynthesis of AMP from IMP. The chain is Adenylosuccinate synthetase from Streptococcus equi subsp. zooepidemicus (strain H70).